The primary structure comprises 505 residues: Chromosomal replication initiator protein DnaA (505 aa).

The interval 1–90 (MSVELWQQCV…RRSSAPRAAP (90 aa)) is domain I, interacts with DnaA modulators. Positions 91–168 (NAPVSAAVAA…QVEGALKHTS (78 aa)) are domain II. The tract at residues 169–385 (YLNRTFTFDT…GALKRVIAHS (217 aa)) is domain III, AAA+ region. Glycine 213, glycine 215, lysine 216, and threonine 217 together coordinate ATP. The interval 386–505 (HFMGRDITIE…YKNLLRTLTT (120 aa)) is domain IV, binds dsDNA.

The protein belongs to the DnaA family. As to quaternary structure, oligomerizes as a right-handed, spiral filament on DNA at oriC.

The protein resides in the cytoplasm. Plays an essential role in the initiation and regulation of chromosomal replication. ATP-DnaA binds to the origin of replication (oriC) to initiate formation of the DNA replication initiation complex once per cell cycle. Binds the DnaA box (a 9 base pair repeat at the origin) and separates the double-stranded (ds)DNA. Forms a right-handed helical filament on oriC DNA; dsDNA binds to the exterior of the filament while single-stranded (ss)DNA is stabiized in the filament's interior. The ATP-DnaA-oriC complex binds and stabilizes one strand of the AT-rich DNA unwinding element (DUE), permitting loading of DNA polymerase. After initiation quickly degrades to an ADP-DnaA complex that is not apt for DNA replication. Binds acidic phospholipids. The sequence is that of Chromosomal replication initiator protein DnaA from Pseudomonas putida (strain ATCC 700007 / DSM 6899 / JCM 31910 / BCRC 17059 / LMG 24140 / F1).